Reading from the N-terminus, the 217-residue chain is Peptide methionine sulfoxide reductase MsrA (217 aa).

The active site involves cysteine 56.

Belongs to the MsrA Met sulfoxide reductase family.

It catalyses the reaction L-methionyl-[protein] + [thioredoxin]-disulfide + H2O = L-methionyl-(S)-S-oxide-[protein] + [thioredoxin]-dithiol. It carries out the reaction [thioredoxin]-disulfide + L-methionine + H2O = L-methionine (S)-S-oxide + [thioredoxin]-dithiol. In terms of biological role, has an important function as a repair enzyme for proteins that have been inactivated by oxidation. Catalyzes the reversible oxidation-reduction of methionine sulfoxide in proteins to methionine. The chain is Peptide methionine sulfoxide reductase MsrA from Rippkaea orientalis (strain PCC 8801 / RF-1) (Cyanothece sp. (strain PCC 8801)).